The sequence spans 680 residues: Putative cyclin-dependent serine/threonine-protein kinase DDB_G0272797/DDB_G0274007 (680 aa).

Residues 4 to 381 form the Protein kinase domain; sequence YIILSKCGQG…SLEALEHPWF (378 aa). ATP contacts are provided by residues 10–18 and lysine 33; that span reads CGQGTYGSV. Aspartate 125 (proton acceptor) is an active-site residue. 4 disordered regions span residues 243-299, 409-444, 483-507, and 597-680; these read QQQQ…LQSP, RQLQ…QRQH, LAQH…QHQQ, and QQQQ…KSNG. Residues 257–286 show a composition bias toward low complexity; that stretch reads NNNNNNNNNNNNNNNNNNNNNNNNNNNNNN. Over residues 287-297 the composition is skewed to polar residues; sequence KYNNISTSCLQ. Composition is skewed to low complexity over residues 410-444, 483-494, and 597-616; these read QLQQ…QRQH, LAQHQQYNSQQH, and QQQQ…PPQH. Basic residues predominate over residues 617–631; it reads QHQHQHQHQHQHQHQ. Over residues 632–642 the composition is skewed to low complexity; sequence HQPQPQHQHQP. Residues 643–655 show a composition bias toward pro residues; it reads QPQPQPTPTPTPT. Positions 656 to 680 are enriched in low complexity; that stretch reads STPTTTTIPPTITTTIQPTISKSNG.

This sequence belongs to the protein kinase superfamily. CMGC Ser/Thr protein kinase family. CDC2/CDKX subfamily.

The catalysed reaction is L-seryl-[protein] + ATP = O-phospho-L-seryl-[protein] + ADP + H(+). It catalyses the reaction L-threonyl-[protein] + ATP = O-phospho-L-threonyl-[protein] + ADP + H(+). This chain is Putative cyclin-dependent serine/threonine-protein kinase DDB_G0272797/DDB_G0274007, found in Dictyostelium discoideum (Social amoeba).